Here is a 170-residue protein sequence, read N- to C-terminus: Adenine phosphoribosyltransferase (170 aa).

This sequence belongs to the purine/pyrimidine phosphoribosyltransferase family. In terms of assembly, homodimer.

Its subcellular location is the cytoplasm. It catalyses the reaction AMP + diphosphate = 5-phospho-alpha-D-ribose 1-diphosphate + adenine. It functions in the pathway purine metabolism; AMP biosynthesis via salvage pathway; AMP from adenine: step 1/1. Catalyzes a salvage reaction resulting in the formation of AMP, that is energically less costly than de novo synthesis. This Bacillus pumilus (strain SAFR-032) protein is Adenine phosphoribosyltransferase.